The sequence spans 183 residues: DELTA-miturgitoxin-Cp1b (183 aa).

An N-terminal signal peptide occupies residues 1-20; the sequence is MKFSLFFSVFFLAVLHACLS. Residues 21–47 constitute a propeptide that is removed on maturation; it reads ESEIDLEDEEHFMSSDSFLSEIQDESR. Positions 44–47 match the Processing quadruplet motif motif; the sequence is DESR. Intrachain disulfides connect cysteine 51–cysteine 66, cysteine 58–cysteine 75, cysteine 65–cysteine 88, cysteine 77–cysteine 86, cysteine 115–cysteine 130, cysteine 122–cysteine 139, cysteine 129–cysteine 157, and cysteine 141–cysteine 155. The segment at 164–177 is predicted alpha-helix; the sequence is QAIEGALRIAKKLI. A Tryptophan amide modification is found at tryptophan 181.

The protein belongs to the neurotoxin 19 (CSTX) family. Double-CSTX subfamily. In terms of processing, cleavage of the propeptide depends on the processing quadruplet motif (XXXR, with at least one of X being E). In terms of tissue distribution, expressed by the venom gland.

Its subcellular location is the secreted. It is found in the target cell membrane. Its function is as follows. Spider venom toxin that exhibits cytolytic activity by forming an alpha-helix across the membrane. Lethal to insect larvae. Causes instant paralysis and death in the larvae of the flesh fly (S.carnaria) at doses of 20 ug/g, at doses of less than 10 ug/g causes reversible paralysis. Has cytolytic activity against insect Sf9 cells. Causes stable and irreversible depolarization of fly muscle fibers, leading to contracture at higher toxin concentrations. Destabilizes membranes. This is DELTA-miturgitoxin-Cp1b from Cheiracanthium punctorium (Yellow sac spider).